We begin with the raw amino-acid sequence, 437 residues long: MGERLFESAEGSQCGETFTQVPEDMLNKKTLPGVKSCESGTCGEIFMGYSSFNRNIRTDTGHQPHKCQKFLEKPYKHKQRRKALSHSHCFRTHERPHTREKPFDCKECEKSFISPASIRRYMVTHSGDGPYKCKFCGKALDCLSLYLTHERTHTGEKRYECKQCGKAFSWHSSVRIHERTHTGEKPYECKECGKSFNFSSSFRRHERTHTGEKPYKCKECGKAFNCPSSFHRHERTHTGEKPYECKLYGKALSRLISFRRHMRMHTGERPHKCKICGKAFYSPSSFQRHERSHTGEKPYKCKQCGKAFTCSTSFQYHERTHTGEKPDGCKQCGKAFRSAKYIRIHGRTHTGEKPYECKQCGKAFHCVSSFHRHERTHAGEKPYECKHCGKAFTCSIYIRIHERIHTGEKPYQCKECGKAFIRSSYCRKHERTHTINI.

The C2H2-type 1; degenerate zinc finger occupies 35–59 (KSCESGTCGEIFMGYSSFNRNIRTD). The segment at 103–125 (FDCKECEKSFISPASIRRYMVTH) adopts a C2H2-type 2; degenerate zinc-finger fold. C2H2-type zinc fingers lie at residues 131-153 (YKCK…ERTH), 159-181 (YECK…ERTH), 187-209 (YECK…ERTH), 215-237 (YKCK…ERTH), 243-265 (YECK…MRMH), 271-293 (HKCK…ERSH), 299-321 (YKCK…ERTH), 327-349 (DGCK…GRTH), 355-377 (YECK…ERTH), 383-405 (YECK…ERIH), and 411-433 (YQCK…ERTH).

This sequence belongs to the krueppel C2H2-type zinc-finger protein family.

Its subcellular location is the nucleus. Functionally, may be involved in transcriptional regulation. This is Zinc finger protein 491 (ZNF491) from Homo sapiens (Human).